The sequence spans 445 residues: GTPase Der (445 aa).

EngA-type G domains are found at residues 3-167 (PVIA…YAGQ) and 180-353 (IKIA…AAAM). Residues 9-16 (GRPNVGKS), 56-60 (DTGGF), 119-122 (NKAE), 186-193 (GRPNVGKS), 233-237 (DTAGL), and 298-301 (NKWD) contribute to the GTP site. In terms of domain architecture, KH-like spans 354–438 (AKLPTPKLTR…PLRIEFRSSN (85 aa)).

It belongs to the TRAFAC class TrmE-Era-EngA-EngB-Septin-like GTPase superfamily. EngA (Der) GTPase family. Associates with the 50S ribosomal subunit.

In terms of biological role, GTPase that plays an essential role in the late steps of ribosome biogenesis. The chain is GTPase Der from Burkholderia vietnamiensis (strain G4 / LMG 22486) (Burkholderia cepacia (strain R1808)).